The following is a 469-amino-acid chain: RuvB-like helicase 2 (469 aa).

Position 76–83 (76–83 (GPPSTGKT)) interacts with ATP.

It belongs to the RuvB family. As to quaternary structure, may form heterododecamers with RVB1. Component of the SWR1 chromatin remodeling complex, the INO80 chromatin remodeling complex, and of the R2TP complex.

It localises to the nucleus. The enzyme catalyses ATP + H2O = ADP + phosphate + H(+). DNA helicase which participates in several chromatin remodeling complexes, including the SWR1 and the INO80 complexes. The SWR1 complex mediates the ATP-dependent exchange of histone H2A for the H2A variant HZT1 leading to transcriptional regulation of selected genes by chromatin remodeling. The INO80 complex remodels chromatin by shifting nucleosomes and is involved in DNA repair. Also involved in pre-rRNA processing. The chain is RuvB-like helicase 2 (rvb2) from Aspergillus fumigatus (strain ATCC MYA-4609 / CBS 101355 / FGSC A1100 / Af293) (Neosartorya fumigata).